Consider the following 105-residue polypeptide: Photosystem II 5 kDa protein, chloroplastic (105 aa).

A chloroplast-targeting transit peptide spans 1–77 (MASITMTTSF…ICSVAGVATA (77 aa)).

In terms of processing, the maturation of the PSII-T precursor to its final form occurs through a two step process. First, a stromal intermediate is formed, which, upon translocation into the thylakoid membrane, is processed to the mature protein.

Its subcellular location is the plastid. The protein localises to the chloroplast thylakoid membrane. Its function is as follows. May be a component of the oxygen-evolving complex. The sequence is that of Photosystem II 5 kDa protein, chloroplastic (PSBT) from Gossypium hirsutum (Upland cotton).